The following is a 299-amino-acid chain: DNA-binding transcriptional activator HetR (299 aa).

The active site involves S152.

Belongs to the peptidase S48 family. In terms of assembly, homodimer; disulfide-linked.

Its function is as follows. Controls heterocyst differentiation. Dimerization is required for DNA-binding. Has both a protease and a DNA-binding activity. Increased expression leads to more heterocysts than usual. The sequence is that of DNA-binding transcriptional activator HetR from Nostoc punctiforme (strain ATCC 29133 / PCC 73102).